The chain runs to 316 residues: Ribosomal RNA small subunit methyltransferase H (316 aa).

S-adenosyl-L-methionine is bound by residues 32 to 34, Asp-52, Phe-79, Asp-106, and Gln-113; that span reads AGH.

The protein belongs to the methyltransferase superfamily. RsmH family.

It localises to the cytoplasm. The catalysed reaction is cytidine(1402) in 16S rRNA + S-adenosyl-L-methionine = N(4)-methylcytidine(1402) in 16S rRNA + S-adenosyl-L-homocysteine + H(+). Functionally, specifically methylates the N4 position of cytidine in position 1402 (C1402) of 16S rRNA. The protein is Ribosomal RNA small subunit methyltransferase H of Paenibacillus sp. (strain JDR-2).